The sequence spans 167 residues: uncharacterized protein (167 aa).

2 consecutive DED domains span residues 2-75 and 93-167; these read DLKT…NLFQ and THVL…AKTV.

This is an uncharacterized protein from Saimiriine herpesvirus 2 (strain 11) (SaHV-2).